The primary structure comprises 202 residues: Small ribosomal subunit protein uS4 (202 aa).

The segment covering 1–13 (MSRYRGPRLRVTR) has biased composition (basic residues). Positions 1 to 42 (MSRYRGPRLRVTRRLGELPGLTRKASKKSNPPGQHGQARRKR) are disordered. Positions 90–152 (NRLDNVCFRL…KASKKLVEGN (63 aa)) constitute an S4 RNA-binding domain.

It belongs to the universal ribosomal protein uS4 family. As to quaternary structure, part of the 30S ribosomal subunit. Contacts protein S5. The interaction surface between S4 and S5 is involved in control of translational fidelity.

Functionally, one of the primary rRNA binding proteins, it binds directly to 16S rRNA where it nucleates assembly of the body of the 30S subunit. In terms of biological role, with S5 and S12 plays an important role in translational accuracy. The polypeptide is Small ribosomal subunit protein uS4 (Prochlorococcus marinus (strain AS9601)).